A 389-amino-acid chain; its full sequence is Gastricsin (389 aa).

The signal sequence occupies residues 1-16; sequence MKWMVVALVCLQLLEA. The propeptide at 17-59 is activation peptide; the sequence is KVTKVTLKKFKSIRENLREQGLLEDFLKTNHYDPAQKYHFGDF. The region spanning 73–386 is the Peptidase A1 domain; that stretch reads YFGEISIGTP…DMGNNRVGFA (314 aa). Residue aspartate 91 is part of the active site. 2 disulfides stabilise this stretch: cysteine 104–cysteine 109 and cysteine 268–cysteine 272. Aspartate 277 is an active-site residue. Cysteine 311 and cysteine 344 are disulfide-bonded.

Belongs to the peptidase A1 family.

It is found in the secreted. It catalyses the reaction More restricted specificity than pepsin A, but shows preferential cleavage at Tyr-|-Xaa bonds. High activity on hemoglobin.. Functionally, hydrolyzes a variety of proteins. The polypeptide is Gastricsin (PGC) (Suncus murinus (Asian house shrew)).